Consider the following 276-residue polypeptide: MTVRKNQAALTADEKRRFVAAVLELKRNGRYDEFVRTHNEFIMSDTRTGRRGGPGHRLPLPFLPWHRRFLLDFEQALQSVDSSVALPYWDWSTDRTVRASLWAPDFLGGTGRSSDGRVMDGPFAASTGNWPVNVRVDGRTFLRRSLGTGVRELPTRAEVDSVLSMATYDMAPYNSASDGFRNHLEGWRGVNLHNRVHVWVGGQMATGVSPNDPVFWLHHAYNRQLWAEWQRRHPGAGYVPTGGTPDVVDLNDTMKPWNDVRPADLLTHTAHYTFDV.

H38, H56, H66, H193, H197, and H219 together coordinate Cu cation.

It belongs to the tyrosinase family. Cu(2+) serves as cofactor.

It carries out the reaction 2 L-dopa + O2 = 2 L-dopaquinone + 2 H2O. The enzyme catalyses L-tyrosine + O2 = L-dopaquinone + H2O. This is a copper-containing oxidase that functions in the formation of pigments such as melanins and other polyphenolic compounds. This chain is Tyrosinase (melC2), found in Streptomyces galbus.